The sequence spans 357 residues: tRNA-specific 2-thiouridylase MnmA (357 aa).

Residues 10–17 and Ile36 each bind ATP; that span reads GISGGVDS. The active-site Nucleophile is the Cys98. Cysteines 98 and 194 form a disulfide. ATP is bound at residue Gly122. Residues 144–146 form an interaction with tRNA region; sequence KDQ. Cys194 serves as the catalytic Cysteine persulfide intermediate. Positions 303 to 304 are interaction with tRNA; that stretch reads RY.

This sequence belongs to the MnmA/TRMU family.

It localises to the cytoplasm. It carries out the reaction S-sulfanyl-L-cysteinyl-[protein] + uridine(34) in tRNA + AH2 + ATP = 2-thiouridine(34) in tRNA + L-cysteinyl-[protein] + A + AMP + diphosphate + H(+). Its function is as follows. Catalyzes the 2-thiolation of uridine at the wobble position (U34) of tRNA, leading to the formation of s(2)U34. In Chlorobium phaeovibrioides (strain DSM 265 / 1930) (Prosthecochloris vibrioformis (strain DSM 265)), this protein is tRNA-specific 2-thiouridylase MnmA.